The sequence spans 764 residues: Transient receptor potential cation channel subfamily V member 2 (764 aa).

The interval 1-46 (MTSPSSSPVFRLETLDGGQEDGSEADRGKLDFGSGLPPMESQFQGE) is disordered. The interval 1-388 (MTSPSSSPVF…LLQAKWDLLI (388 aa)) is required for interaction with SLC50A1. Residues 1–390 (MTSPSSSPVF…QAKWDLLIPK (390 aa)) are Cytoplasmic-facing. Ser6 is modified (phosphoserine). ANK repeat units lie at residues 72-114 (NRFD…TEGS), 115-161 (TGKT…DDYY), 162-207 (RGHS…TCFY), 208-243 (FGEL…ATDS), 244-292 (QGNT…IRNL), and 293-319 (QDLT…REFS). A helical membrane pass occupies residues 391 to 411 (FFLNFLCNLIYMFIFTAVAYH). At 412–434 (QPTLKKQAAPHLKAEVGNSMLLT) the chain is on the extracellular side. The helical transmembrane segment at 435 to 455 (GHILILLGGIYLLVGQLWYFW) threads the bilayer. The Cytoplasmic portion of the chain corresponds to 456–471 (RRHVFIWISFIDSYFE). The helical transmembrane segment at 472 to 492 (ILFLFQALLTVVSQVLCFLAI) threads the bilayer. Position 493 (Glu493) is a topological domain, extracellular. A helical membrane pass occupies residues 494 to 514 (WYLPLLVSALVLGWLNLLYYT). At 515-537 (RGFQHTGIYSVMIQKVILRDLLR) the chain is on the cytoplasmic side. The chain crosses the membrane as a helical span at residues 538–558 (FLLIYLVFLFGFAVALVSLSQ). The segment at 562–585 (RPEAPTGPNATESVQPMEGQEDEG) is disordered. The N-linked (GlcNAc...) asparagine glycan is linked to Asn570. Residues 572-609 (TESVQPMEGQEDEGNGAQYRGILEASLELFKFTIGMGE) constitute an intramembrane region (pore-forming). Residues 622 to 642 (VLLLLLAYVLLTYILLLNMLI) traverse the membrane as a helical segment. Residues 643–764 (ALMSETVNSV…YVPVQLLQSN (122 aa)) are Cytoplasmic-facing. The disordered stretch occupies residues 725–756 (PSGAGVPRTLENPVLASPPKEDEDGASEENYV). Residues Ser751 and Ser763 each carry the phosphoserine modification.

This sequence belongs to the transient receptor (TC 1.A.4) family. TrpV subfamily. TRPV2 sub-subfamily. Homotetramer. Interacts with a cAMP-dependent protein kinase type II regulatory subunit (PRKAR2A or PRKAR2B) and ACBD3. Interacts with SLC50A1; the interaction probably occurs intracellularly and depends on TRPV2 N-glycosylation. N-glycosylated. Post-translationally, phosphorylated by PKA.

The protein localises to the cell membrane. It localises to the cytoplasm. It is found in the melanosome. The catalysed reaction is Ca(2+)(in) = Ca(2+)(out). The enzyme catalyses Mg(2+)(in) = Mg(2+)(out). It carries out the reaction Na(+)(in) = Na(+)(out). It catalyses the reaction K(+)(in) = K(+)(out). Calcium-permeable, non-selective cation channel with an outward rectification. Seems to be regulated, at least in part, by IGF1, PDGF and neuropeptide head activator. May transduce physical stimuli in mast cells. Activated by temperatures higher than 52 degrees Celsius; is not activated by vanilloids and acidic pH. This Homo sapiens (Human) protein is Transient receptor potential cation channel subfamily V member 2 (TRPV2).